The following is a 1915-amino-acid chain: Protein NLRC5 (1915 aa).

The segment at 103-137 (LGAGEESCPGPQLYHGAKRPFQSYGSSPRRKNSKK) is disordered. Residues 223 to 542 (RVTVLLGKAG…HTVDKDTLVE (320 aa)) enclose the NACHT domain. 229 to 236 (GKAGMGKT) lines the ATP pocket. LRR repeat units lie at residues 622–646 (VAET…SFHN), 716–740 (MGSL…LIQT), 744–771 (CSQL…LLPS), 772–796 (LPKL…LVKV), 871–898 (SPQL…AASQ), 900–923 (HIAQ…VLKA), 930–953 (LEDL…PREQ), 1006–1033 (THNL…LLPG), 1034–1055 (LGPL…VFSL), 1138–1161 (EVQL…LPQL), 1162–1184 (PQLS…LLAD), 1240–1263 (CNAL…CLLE), 1265–1292 (LPQL…LLET), 1348–1371 (AQQL…MLLN), 1481–1504 (SKLL…FSQV), 1519–1542 (CHHL…LLMG), 1552–1575 (KLHL…LSRM), 1576–1598 (TLLQ…CLAA), 1603–1626 (LPEL…CLAA), 1631–1654 (LPEL…CLAA), 1659–1682 (LPEL…CLAA), 1687–1711 (LPEL…LVKS), 1715–1738 (FEHL…ELAQ), 1741–1768 (PPQL…ALEQ), 1769–1795 (CPHI…RLPL), 1821–1845 (FPAL…LAQV), and 1849–1872 (MGQL…LLAQ).

This sequence belongs to the NLRP family. In terms of assembly, interacts with CHUK and IKBKB; prevents CHUK and IKBKB phosphorylation and inhibits their kinase activity. Interacts with RIGI and IFIH1; blocks the interaction of MAVS to RIGI. In terms of tissue distribution, expressed in spleen, thymus and lung.

It localises to the cytoplasm. Probable regulator of the NF-kappa-B and type I interferon signaling pathways. May also regulate the type II interferon signaling pathway. Plays a role in homeostatic control of innate immunity and in antiviral defense mechanisms. In Mus musculus (Mouse), this protein is Protein NLRC5 (Nlrc5).